The sequence spans 542 residues: N-substituted formamide deformylase (542 aa).

A propeptide spanning residues Met1–Thr2 is cleaved from the precursor.

Homodimer. Requires Zn(2+) as cofactor.

It catalyses the reaction N-benzylformamide + H2O = benzylamine + formate. With respect to regulation, completely inhibited by HgCl(2), CuCl, CuCl(2) and AgNO(3). Partially inhibited by ZnCl(2) and SnCl(2). Almost completely inhibited by the reducing reagent DTT. Partially inhibited by phenylhydrazine. Moderately inhibited by phenanthroline and 8-hydroxyquinoline. Completely inhibited by the thiol-specific inhibitors N-ethylmaleimide and p-chloromercuribenzoate. Not inhibited by the carbonyl-specific inhibitors aminoguanidine and semicarbazide, the chelating agents alpha,alpha'-dipyridyl, KCN, diethyldithiocarbamate and EDTA, or the oxidizing reagents and serine-modifying reagents such as H(2)O(2), ammonium persulfate, phenylmethanesulfonyl fluoride and diisopropyl fluorophosphates. Hydrolyzes N-substituted formamides, but not amides. N-benzylformamide is the preferred substrate, while N-butylformamide is hydrolyzed at a much lower rate. Has very low activity towards allylformamide, N-(2-cyclohex-1-enylethyl)formamide and N-(alpha-methylbenzyl)formamide. The sequence is that of N-substituted formamide deformylase from Arthrobacter pascens.